The following is a 460-amino-acid chain: GTPase Der (460 aa).

EngA-type G domains follow at residues 3–167 and 189–364; these read FTIA…PEPT and IRVA…AIWN. Residues 9 to 16, 56 to 60, 119 to 122, 195 to 202, 242 to 246, and 307 to 310 contribute to the GTP site; these read GRPNVGKS, DTAGL, NKSE, GRPNAGKS, and NKWD. The region spanning 365-449 is the KH-like domain; sequence RRVPTAALNR…PIRITLREKA (85 aa).

The protein belongs to the TRAFAC class TrmE-Era-EngA-EngB-Septin-like GTPase superfamily. EngA (Der) GTPase family. Associates with the 50S ribosomal subunit.

GTPase that plays an essential role in the late steps of ribosome biogenesis. This chain is GTPase Der, found in Nitrobacter hamburgensis (strain DSM 10229 / NCIMB 13809 / X14).